The following is a 152-amino-acid chain: Biotin carboxyl carrier protein of acetyl-CoA carboxylase (152 aa).

Residues 72-148 (IIDILSPISG…TKNQVLMKII (77 aa)) enclose the Biotinyl-binding domain. Position 114 is an N6-biotinyllysine (K114).

Its subcellular location is the plastid. The protein localises to the chloroplast. Its pathway is lipid metabolism; fatty acid biosynthesis. Functionally, this protein is a component of the acetyl coenzyme A carboxylase complex; first, biotin carboxylase catalyzes the carboxylation of the carrier protein and then the transcarboxylase transfers the carboxyl group to form malonyl-CoA. This Cyanidium caldarium (Red alga) protein is Biotin carboxyl carrier protein of acetyl-CoA carboxylase (accB).